Consider the following 447-residue polypeptide: C4-dicarboxylate transport protein (447 aa).

A run of 8 helical transmembrane segments spans residues 19 to 39 (ILYV…HFYP), 55 to 75 (LVKM…IAGL), 90 to 110 (IYFL…ANVV), 155 to 175 (AFAS…GIAL), 199 to 219 (LVAI…AFTI), 232 to 252 (MLVG…LGLV), 343 to 363 (LLLV…AGFI), and 366 to 386 (AATL…ILGV).

The protein belongs to the dicarboxylate/amino acid:cation symporter (DAACS) (TC 2.A.23) family.

The protein resides in the cell inner membrane. In terms of biological role, responsible for the transport of dicarboxylates such as succinate, fumarate, and malate from the periplasm across the membrane. The chain is C4-dicarboxylate transport protein from Rhodospirillum rubrum (strain ATCC 11170 / ATH 1.1.1 / DSM 467 / LMG 4362 / NCIMB 8255 / S1).